We begin with the raw amino-acid sequence, 354 residues long: MTALKNDRFLRALLKQPVDVTPVWMMRQAGRYLPEYRASRAKAGDFMSLCMNPQFACEVTLQPLDRYPLDAAILFSDILTIPDAMGLGLYFETGEGPRFKKVISTPADIEALPVPDPQKDLGYVMDAVSTIRRELNGRVPLIGFSGSPWTLATYMVEGGSSKDFRKTKAMAYDNPQALHLLLDKLAQSVTSYLNGQILAGAQAVQIFDTWGGNLSAAAYQEFSLAYMRKIVSGLIREHEGRKVPVILFTKNGGLWLESIADAGADALGLDWTCEIGDARRRVGDKVALQGNMDPTVLYAKPEAIRKEVARILASYGHGTGHVFNLGHGITPEVDPEHAGVFINAVHELSAQYHQ.

Residues 27 to 31 (RQAGR), aspartate 77, tyrosine 154, threonine 209, and histidine 327 contribute to the substrate site.

This sequence belongs to the uroporphyrinogen decarboxylase family. As to quaternary structure, homodimer.

It localises to the cytoplasm. It carries out the reaction uroporphyrinogen III + 4 H(+) = coproporphyrinogen III + 4 CO2. The protein operates within porphyrin-containing compound metabolism; protoporphyrin-IX biosynthesis; coproporphyrinogen-III from 5-aminolevulinate: step 4/4. In terms of biological role, catalyzes the decarboxylation of four acetate groups of uroporphyrinogen-III to yield coproporphyrinogen-III. The chain is Uroporphyrinogen decarboxylase from Pseudomonas putida (strain ATCC 700007 / DSM 6899 / JCM 31910 / BCRC 17059 / LMG 24140 / F1).